A 134-amino-acid chain; its full sequence is UPF0412 protein YaaI (134 aa).

A signal peptide spans 1-23 (MKSVFTISASLAISLMLCCTAQA).

Belongs to the UPF0412 family.

The sequence is that of UPF0412 protein YaaI from Escherichia coli (strain K12).